Consider the following 1026-residue polypeptide: DNA cross-link repair 1A protein (1026 aa).

Positions 1–189 (MLEDTWEEEI…RDSKEPLGSP (189 aa)) are nuclear localization region. Residues 12–110 (EYKSKRKPKP…HRTRRGKQVT (99 aa)) form a disordered region. The span at 34-65 (SVEKSTDGKHQSKGNEKRTSENPGKTKDHKVC) shows a compositional bias: basic and acidic residues. The span at 71 to 82 (SQISAGSSQSSS) shows a compositional bias: low complexity. The segment covering 98-107 (KKQHRTRRGK) has biased composition (basic residues). Residues 118 to 148 (DGYCPSCQMPFSSLLGQTPQWHVFECLDSPP) form a UBZ4-type zinc finger. 4 residues coordinate Zn(2+): C121, C124, H139, and C143. Residues K359, K434, and K522 each participate in a glycyl lysine isopeptide (Lys-Gly) (interchain with G-Cter in SUMO2) cross-link. A nuclear focus formation region spans residues 401–602 (SQEDLPHTDA…SSLSDLEFDA (202 aa)). Disordered stretches follow at residues 474–542 (PLEK…SKKV), 560–590 (ETSL…CKRK), and 602–651 (AKNL…PELG). A compositionally biased stretch (low complexity) spans 527–540 (SPSSPKCSPSQPSK). Positions 569–581 (EGPNVSPVVSPNQ) are enriched in polar residues. A phosphoserine mark is found at S574 and S578. Positions 619–628 (RQHRRKRHKT) are enriched in basic residues. Residue K657 forms a Glycyl lysine isopeptide (Lys-Gly) (interchain with G-Cter in SUMO2) linkage.

The protein belongs to the DNA repair metallo-beta-lactamase (DRMBL) family. Binds constitutively to TP53BP1. Binds CDC27, which is itself a component of the anaphase promoting complex (APC). Binds PIAS1.

Its subcellular location is the nucleus. It carries out the reaction a beta-lactam + H2O = a substituted beta-amino acid. May be required for DNA interstrand cross-link repair. Also required for checkpoint mediated cell cycle arrest in early prophase in response to mitotic spindle poisons. The sequence is that of DNA cross-link repair 1A protein (Dclre1a) from Mus musculus (Mouse).